Consider the following 369-residue polypeptide: Histidinol-phosphate aminotransferase (369 aa).

The disordered stretch occupies residues Met1–Pro39. Position 230 is an N6-(pyridoxal phosphate)lysine (Lys230).

The protein belongs to the class-II pyridoxal-phosphate-dependent aminotransferase family. Histidinol-phosphate aminotransferase subfamily. As to quaternary structure, homodimer. The cofactor is pyridoxal 5'-phosphate.

It carries out the reaction L-histidinol phosphate + 2-oxoglutarate = 3-(imidazol-4-yl)-2-oxopropyl phosphate + L-glutamate. It participates in amino-acid biosynthesis; L-histidine biosynthesis; L-histidine from 5-phospho-alpha-D-ribose 1-diphosphate: step 7/9. This chain is Histidinol-phosphate aminotransferase (hisC), found in Streptomyces avermitilis (strain ATCC 31267 / DSM 46492 / JCM 5070 / NBRC 14893 / NCIMB 12804 / NRRL 8165 / MA-4680).